Consider the following 421-residue polypeptide: Voltage-dependent calcium channel gamma-8 subunit (421 aa).

A run of 4 helical transmembrane segments spans residues Val19–Ile39, Ser127–Ala147, Ile157–Ile177, and Phe207–Ile227. Phosphoserine occurs at positions 251 and 254. The tract at residues Arg271 to Ile304 is disordered. Low complexity predominate over residues Ser276 to Arg287. The helical transmembrane segment at Val318 to Gly338 threads the bilayer. 2 disordered regions span residues Gly342–Thr363 and Val378–Val421. Positions Pro384 to Pro397 are enriched in pro residues. Residues Ala408–Val421 show a composition bias toward polar residues.

Belongs to the PMP-22/EMP/MP20 family. CACNG subfamily. Interacts with CACNA1C. Identified in a complex with the L-type calcium channel subunits CACNA1C, CACNA2D1 and either CACNB1 or CACNB2. Acts as an auxiliary subunit for AMPA-selective glutamate receptors (AMPARs). Found in a complex with GRIA1, GRIA2, GRIA3, GRIA4, CNIH2, CNIH3, CACNG2, CACNG3, CACNG4, CACNG5 and CACNG7. Interacts with CNIH2. Found in a complex with GRIA1, GRIA2, GRIA3, GRIA4, DLG4 and CNIH2. In terms of processing, palmitoylated. Probably palmitoylated by ZDHHC3 and ZDHHC7.

The protein resides in the cell membrane. It localises to the postsynaptic density membrane. Functionally, regulates the activity of L-type calcium channels that contain CACNA1C as pore-forming subunit. Regulates the trafficking and gating properties of AMPA-selective glutamate receptors (AMPARs). Promotes their targeting to the cell membrane and synapses and modulates their gating properties by slowing their rates of activation, deactivation and desensitization and by mediating their resensitization. Does not show subunit-specific AMPA receptor regulation and regulates all AMPAR subunits. Thought to stabilize the calcium channel in an inactivated (closed) state. In Rattus norvegicus (Rat), this protein is Voltage-dependent calcium channel gamma-8 subunit.